A 243-amino-acid polypeptide reads, in one-letter code: Terpene cyclase penB (243 aa).

A run of 3 helical transmembrane segments spans residues 19–39 (IANI…VGMI), 48–68 (YGMA…YSLI), and 78–98 (GVFI…IKFA). Asparagine 111 carries N-linked (GlcNAc...) asparagine glycosylation. The next 4 helical transmembrane spans lie at 112 to 132 (LSLI…ALAA), 137 to 157 (SLAY…GGLC), 172 to 194 (LWLS…WMYW), and 205 to 225 (LVLW…LCYW).

This sequence belongs to the paxB family.

It is found in the membrane. It functions in the pathway secondary metabolite biosynthesis. Its function is as follows. Terpene cyclase; part of the gene cluster that mediates the biosynthesis of the indole diterpenes penitrems. The geranylgeranyl diphosphate (GGPP) synthase penG catalyzes the first step in penitrem biosynthesis via conversion of farnesyl pyrophosphate and isopentyl pyrophosphate into geranylgeranyl pyrophosphate (GGPP). Condensation of indole-3-glycerol phosphate with GGPP by the prenyl transferase penC then forms 3-geranylgeranylindole (3-GGI). Epoxidation by the FAD-dependent monooxygenase penM leads to a epoxidized-GGI that is substrate of the terpene cyclase penB for cyclization to yield paspaline. Paspaline is subsequently converted to 13-desoxypaxilline by the cytochrome P450 monooxygenase penP, the latter being then converted to paxilline by the cytochrome P450 monooxygenase penQ. Paxilline is converted to beta-paxitriol via C-10 ketoreduction by the short-chain dehydrogenase PC-15 which can be monoprenylated at the C-20 by the indole diterpene prenyltransferase penD. A two-step elimination (acetylation and elimination) process performed by the O-acetyltransferase PC-16 and the P.simplicissimum ptmI-ortholog not yet identified in P.crustosum, leads to the production of the prenylated form of penijanthine. The FAD-linked oxidoreductase ptmO then converts the prenylated form of penijanthine into PC-M5 which is in turn transformed into PC-M4 by the aromatic dimethylallyltransferase PC-22. A series of oxidation steps involving 4 cytochrome P450 monooxygenases (PC-21, PC-05, PC-23, PC-20) and a FAD-dependent monooxygenase (PC-14) are required for the transformation of PC-M4 to penitrems A and E. Synthesis of these final products is proposed to proceed via penitrems D and C (PC-21, PC-05, PC-14) and penitrems B and F (PC-21, PC-05, PC-14, PC-23). The protein is Terpene cyclase penB (penB) of Penicillium crustosum (Blue mold fungus).